A 242-amino-acid chain; its full sequence is GDSL esterase/lipase At5g62930 (242 aa).

Residue Ser-11 is the Nucleophile of the active site. Residues 223–242 (PHHSHIDGKNPSKAFEERCL) are disordered.

Belongs to the 'GDSL' lipolytic enzyme family.

In Arabidopsis thaliana (Mouse-ear cress), this protein is GDSL esterase/lipase At5g62930.